The chain runs to 214 residues: MSTIAVIDYDMGNLHSVCKGLEKAGATPKITDSSIEIDKADAVILPGVGSFDPAVQHLRTRNLEIPIKQVIASGKPFLGICLGLQILFESSEEGQEPGLGIFAGKVCRFKSEPGLTIPQMGWNKLQFTQPEHLLWSEIGSQPWVYFVHSYYVDPTDSQVTAATVTHGHQTVTAAVGKDNLIAVQFHPEKSSTAGLKILSNFVSKVIPKNLALAS.

Positions 3-211 (TIAVIDYDMG…VSKVIPKNLA (209 aa)) constitute a Glutamine amidotransferase type-1 domain. The active-site Nucleophile is the cysteine 81. Active-site residues include histidine 186 and glutamate 188.

As to quaternary structure, heterodimer of HisH and HisF.

It is found in the cytoplasm. The catalysed reaction is 5-[(5-phospho-1-deoxy-D-ribulos-1-ylimino)methylamino]-1-(5-phospho-beta-D-ribosyl)imidazole-4-carboxamide + L-glutamine = D-erythro-1-(imidazol-4-yl)glycerol 3-phosphate + 5-amino-1-(5-phospho-beta-D-ribosyl)imidazole-4-carboxamide + L-glutamate + H(+). It carries out the reaction L-glutamine + H2O = L-glutamate + NH4(+). It functions in the pathway amino-acid biosynthesis; L-histidine biosynthesis; L-histidine from 5-phospho-alpha-D-ribose 1-diphosphate: step 5/9. Functionally, IGPS catalyzes the conversion of PRFAR and glutamine to IGP, AICAR and glutamate. The HisH subunit catalyzes the hydrolysis of glutamine to glutamate and ammonia as part of the synthesis of IGP and AICAR. The resulting ammonia molecule is channeled to the active site of HisF. This Trichodesmium erythraeum (strain IMS101) protein is Imidazole glycerol phosphate synthase subunit HisH.